The chain runs to 305 residues: Ankyrin repeat domain-containing protein 23 (305 aa).

Positions 41–72 form a coiled coil; sequence QEAVAREKLKLEEEKKKKLERFNSTRFNLDNL. Residues 83-92 are compositionally biased toward basic residues; it reads KKRLRHRVPP. The segment at 83–104 is disordered; sequence KKRLRHRVPPRKPEPLVKPQSQ. ANK repeat units lie at residues 143-172, 176-205, 209-238, and 242-271; these read LHRT…TVDA, LDRT…RVNA, IGST…HLNA, and EGDT…ELGV. The interval 178 to 195 is interaction with TTN; that stretch reads RTPVFWACRGGHLVILKQ.

As to quaternary structure, interacts with titin/TTN and MYPN. In terms of tissue distribution, mainly expressed in heart, skeletal muscle and brown adipose tissues.

It localises to the nucleus. May be involved in the energy metabolism. Could be a molecular link between myofibrillar stretch-induced signaling pathways and muscle gene expression. The sequence is that of Ankyrin repeat domain-containing protein 23 (ANKRD23) from Homo sapiens (Human).